Consider the following 423-residue polypeptide: Putative protein phosphatase 2C 50 (423 aa).

Residues 52–380 (IFAFPFPTGT…DNMAAVVVPL (329 aa)) form the PPM-type phosphatase domain. 4 residues coordinate Mn(2+): Asp-74, Gly-75, Asp-320, and Asp-371.

The protein belongs to the PP2C family. It depends on Mg(2+) as a cofactor. Mn(2+) serves as cofactor.

The enzyme catalyses O-phospho-L-seryl-[protein] + H2O = L-seryl-[protein] + phosphate. It carries out the reaction O-phospho-L-threonyl-[protein] + H2O = L-threonyl-[protein] + phosphate. The chain is Putative protein phosphatase 2C 50 from Arabidopsis thaliana (Mouse-ear cress).